A 351-amino-acid polypeptide reads, in one-letter code: Protein Wnt-4 (351 aa).

The N-terminal stretch at 1–22 (MSPEYFLRSLLLIILATFSANA) is a signal peptide. N-linked (GlcNAc...) asparagine glycosylation is found at N21 and N88. 11 disulfides stabilise this stretch: C78/C89, C128/C136, C138/C155, C206/C220, C208/C215, C280/C311, C296/C306, C310/C350, C326/C341, C328/C338, and C333/C334. A lipid anchor (O-palmitoleoyl serine; by PORCN) is attached at S212. N297 carries N-linked (GlcNAc...) asparagine glycosylation.

This sequence belongs to the Wnt family. In terms of assembly, interacts with CPZ. Post-translationally, palmitoleoylation is required for efficient binding to frizzled receptors. Depalmitoleoylation leads to Wnt signaling pathway inhibition. Predominantly expressed in the diencephalon neuromere D2.

It localises to the secreted. It is found in the extracellular space. Its subcellular location is the extracellular matrix. Functionally, ligand for members of the frizzled family of seven transmembrane receptors. Plays an important role in embryonic development. This Gallus gallus (Chicken) protein is Protein Wnt-4 (WNT4).